The sequence spans 183 residues: MRKDKLKDQYRINEEIRSEEVRVVGNNVEQRIYPISEALRMAGELELDLIEISPTAVPPVCKIFDYQKFIFQQKKHQKEQKVKLSKIVVKEIRFGPQTDEHDYSFKLKHAKSFLEEGNKVKAYVFFRGRSILFKEQGEILLLRFANDLEDYGKVEQLPILEGKKMIITLAPKKVEIISRRLKR.

This sequence belongs to the IF-3 family. Monomer.

The protein localises to the cytoplasm. Functionally, IF-3 binds to the 30S ribosomal subunit and shifts the equilibrium between 70S ribosomes and their 50S and 30S subunits in favor of the free subunits, thus enhancing the availability of 30S subunits on which protein synthesis initiation begins. This Azobacteroides pseudotrichonymphae genomovar. CFP2 protein is Translation initiation factor IF-3.